A 271-amino-acid chain; its full sequence is Cytochrome b termination protein 1 (271 aa).

Its subcellular location is the mitochondrion. In terms of biological role, involved in 5'-end processing of mitochondrial COB, 15S rRNA, and RPM1 transcript. May also have a role in 3'-end processing of the COB pre-mRNA. This chain is Cytochrome b termination protein 1 (CBT1), found in Saccharomyces cerevisiae (strain ATCC 204508 / S288c) (Baker's yeast).